The chain runs to 1073 residues: PX domain-containing protein LEC1 (1073 aa).

The segment covering 218–228 (CTESVDNDKSS) has biased composition (basic and acidic residues). The segment at 218–240 (CTESVDNDKSSKSTPTSSPKSHA) is disordered. Low complexity predominate over residues 229-238 (KSTPTSSPKS). The PX domain occupies 273 to 506 (LFSKLSLGVP…RFFLSGPNLD (234 aa)). Phosphoserine is present on residues serine 310 and serine 451. The interval 431–456 (IKEEDNIDEDEYEEEGEGEESDFDEY) is disordered. Acidic residues predominate over residues 432 to 453 (KEEDNIDEDEYEEEGEGEESDF).

It localises to the endoplasmic reticulum membrane. The protein localises to the lipid droplet. In terms of biological role, phosphoinositide-binding protein that plays a role in regulation of ergosterol distribution in the cell. Facilitates ergosterol transport between plasma membrane and lipid droplets. The chain is PX domain-containing protein LEC1 from Saccharomyces cerevisiae (strain ATCC 204508 / S288c) (Baker's yeast).